Reading from the N-terminus, the 307-residue chain is MNHATSELHDESAVTSVPETTRIQDLKALVKMGIVNSNTLTVFTGFWLALHFNGLSVMDNLDKLFFTIVGSGLVMAGVCCLNNYIDRDIDPLMERTKTRPTVTGKYKPGFALTFGLVILLLGFVFLLLTTPMAVLMGFIGAFTYVVLYSLWTKRKYTLNTVVGSISGAVPPLIGWAAIDPSLGHPIAWMLFLIMFIWQIPHFLALAMKRVDEYRNAGIPMLPVVHGFEITKRQIMIWTVCLLPLPFYMSGLGITFMVIATLLNIGWIVLGFYGFRKKDDIKWSVQMFVYSLNYLTILFVSMIVVTFF.

8 helical membrane-spanning segments follow: residues 32–52 (MGIV…ALHF), 65–85 (FFTI…NNYI), 108–128 (PGFA…FLLL), 131–151 (PMAV…YSLW), 158–178 (LNTV…WAAI), 186–206 (IAWM…LALA), 251–271 (LGIT…VLGF), and 287–307 (FVYS…VTFF).

The protein belongs to the UbiA prenyltransferase family. Protoheme IX farnesyltransferase subfamily. As to quaternary structure, interacts with CtaA.

It localises to the cell membrane. The enzyme catalyses heme b + (2E,6E)-farnesyl diphosphate + H2O = Fe(II)-heme o + diphosphate. Its pathway is porphyrin-containing compound metabolism; heme O biosynthesis; heme O from protoheme: step 1/1. Its function is as follows. Converts heme B (protoheme IX) to heme O by substitution of the vinyl group on carbon 2 of heme B porphyrin ring with a hydroxyethyl farnesyl side group. This is Protoheme IX farnesyltransferase from Bacillus cereus (strain G9842).